A 96-amino-acid polypeptide reads, in one-letter code: ATP-dependent Clp protease adapter protein ClpS (96 aa).

This sequence belongs to the ClpS family. Binds to the N-terminal domain of the chaperone ClpA.

Its function is as follows. Involved in the modulation of the specificity of the ClpAP-mediated ATP-dependent protein degradation. The polypeptide is ATP-dependent Clp protease adapter protein ClpS (Campylobacter jejuni subsp. doylei (strain ATCC BAA-1458 / RM4099 / 269.97)).